The sequence spans 290 residues: Light-independent protochlorophyllide reductase iron-sulfur ATP-binding protein (290 aa).

Residues 10-15 (GIGKST) and Lys39 each bind ATP. Ser14 is a Mg(2+) binding site. [4Fe-4S] cluster contacts are provided by Cys95 and Cys129. 180–181 (NR) serves as a coordination point for ATP.

This sequence belongs to the NifH/BchL/ChlL family. In terms of assembly, homodimer. Protochlorophyllide reductase is composed of three subunits; ChlL, ChlN and ChlB. Requires [4Fe-4S] cluster as cofactor.

The protein localises to the plastid. It localises to the chloroplast. The catalysed reaction is chlorophyllide a + oxidized 2[4Fe-4S]-[ferredoxin] + 2 ADP + 2 phosphate = protochlorophyllide a + reduced 2[4Fe-4S]-[ferredoxin] + 2 ATP + 2 H2O. The protein operates within porphyrin-containing compound metabolism; chlorophyll biosynthesis (light-independent). Its function is as follows. Component of the dark-operative protochlorophyllide reductase (DPOR) that uses Mg-ATP and reduced ferredoxin to reduce ring D of protochlorophyllide (Pchlide) to form chlorophyllide a (Chlide). This reaction is light-independent. The L component serves as a unique electron donor to the NB-component of the complex, and binds Mg-ATP. In Porphyra purpurea (Red seaweed), this protein is Light-independent protochlorophyllide reductase iron-sulfur ATP-binding protein.